The chain runs to 97 residues: Large ribosomal subunit protein bL27 (97 aa).

The span at 1-10 shows a compositional bias: polar residues; it reads MVKLNLSNLQ. Positions 1–12 are excised as a propeptide; it reads MVKLNLSNLQHF. Residues 1-38 are disordered; sequence MVKLNLSNLQHFAHKKGGGSTSNGRDSQAKRLGAKAAD.

It belongs to the bacterial ribosomal protein bL27 family. Post-translationally, the N-terminus is cleaved by ribosomal processing cysteine protease Prp.

This chain is Large ribosomal subunit protein bL27, found in Streptococcus equi subsp. zooepidemicus (strain H70).